The chain runs to 389 residues: Chalcone synthase 4 (389 aa).

Residue C164 is part of the active site.

This sequence belongs to the thiolase-like superfamily. Chalcone/stilbene synthases family.

It catalyses the reaction (E)-4-coumaroyl-CoA + 3 malonyl-CoA + 3 H(+) = 2',4,4',6'-tetrahydroxychalcone + 3 CO2 + 4 CoA. It participates in secondary metabolite biosynthesis; flavonoid biosynthesis. The primary product of this enzyme is 4,2',4',6'-tetrahydroxychalcone (also termed naringenin-chalcone or chalcone) which can under specific conditions spontaneously isomerize into naringenin. The sequence is that of Chalcone synthase 4 (CHS4) from Medicago sativa (Alfalfa).